The primary structure comprises 145 residues: Large ribosomal subunit protein eL32 (145 aa).

Belongs to the eukaryotic ribosomal protein eL32 family.

The protein is Large ribosomal subunit protein eL32 (rpl32e) of Aeropyrum pernix (strain ATCC 700893 / DSM 11879 / JCM 9820 / NBRC 100138 / K1).